Consider the following 454-residue polypeptide: Flavonoid 3-O-glucosyltransferase (454 aa).

T25 lines the UDP pocket. The active-site Proton acceptor is H26. R89 serves as a coordination point for myricetin. Catalysis depends on D124, which acts as the Charge relay. Myricetin is bound by residues H155, E192, and F202. Positions 282, 308, 334, and 335 each coordinate UDP. Residues A335, Q337, H352, W355, N356, S357, and E360 each coordinate UDP-alpha-D-glucose. H352 contacts UDP. Residues N356, S357, and E360 each coordinate UDP. Residue G375 coordinates myricetin. UDP-alpha-D-glucose contacts are provided by D376 and Q377.

It belongs to the UDP-glycosyltransferase family. Highly expressed in flower buds, flowers and pods. Lower expression in leaves, petioles and stems.

Its pathway is secondary metabolite biosynthesis; flavonoid biosynthesis. Functionally, catalyzes the glycosylation of flavonoids at the 3-O-position. Glycosylates the 7-O-position if the 3-O-position is not available. Also able to perform 3-O-glycosylation of anthocyanidins. This Medicago truncatula (Barrel medic) protein is Flavonoid 3-O-glucosyltransferase (UGT78G1).